The sequence spans 427 residues: GTPase Obg (427 aa).

The region spanning 1 to 158 (MFVDIAKIYV…LWVILELKVL (158 aa)) is the Obg domain. Residues 159–330 (ADVGLIGYPN…VLKRAYELLK (172 aa)) form the OBG-type G domain. Residues 165 to 172 (GYPNVGKS), 190 to 194 (FTTKY), 212 to 215 (DIPG), 282 to 285 (NKMD), and 311 to 313 (SAA) contribute to the GTP site. Mg(2+) contacts are provided by Ser-172 and Thr-192. Positions 347 to 427 (FVYYKKKDVK…ILDVEFEYYE (81 aa)) constitute an OCT domain.

It belongs to the TRAFAC class OBG-HflX-like GTPase superfamily. OBG GTPase family. In terms of assembly, monomer. The cofactor is Mg(2+).

The protein localises to the cytoplasm. In terms of biological role, an essential GTPase which binds GTP, GDP and possibly (p)ppGpp with moderate affinity, with high nucleotide exchange rates and a fairly low GTP hydrolysis rate. Plays a role in control of the cell cycle, stress response, ribosome biogenesis and in those bacteria that undergo differentiation, in morphogenesis control. This chain is GTPase Obg, found in Caldicellulosiruptor bescii (strain ATCC BAA-1888 / DSM 6725 / KCTC 15123 / Z-1320) (Anaerocellum thermophilum).